The sequence spans 557 residues: Alpha-barbatene synthase (557 aa).

Residues arginine 273, aspartate 310, aspartate 314, arginine 451, and aspartate 454 each coordinate (2E,6E)-farnesyl diphosphate. Aspartate 310 and aspartate 314 together coordinate Mg(2+). Positions 310-314 (DDACD) match the DDXXD motif motif. Mg(2+) is bound by residues aspartate 454, aspartate 455, and aspartate 462.

Belongs to the terpene synthase family. Tpsa subfamily. As to quaternary structure, monomer. Mg(2+) is required as a cofactor. The cofactor is Mn(2+). Expressed exclusively in flowers. Expressed in intrafloral nectaries and in the funiculus within the ovules.

Its subcellular location is the cytoplasm. It carries out the reaction (2E,6E)-farnesyl diphosphate = (+)-alpha-barbatene + diphosphate. The enzyme catalyses (2E,6E)-farnesyl diphosphate = (+)-thujopsene + diphosphate. It catalyses the reaction (2E,6E)-farnesyl diphosphate = (+)-beta-chamigrene + diphosphate. The catalysed reaction is (2E,6E)-farnesyl diphosphate = (+)-beta-barbatene + diphosphate. It carries out the reaction (2E,6E)-farnesyl diphosphate = beta-sesquiphellandrene + diphosphate. The enzyme catalyses (2E,6E)-farnesyl diphosphate = (S)-beta-bisabolene + diphosphate. It catalyses the reaction (2E,6E)-farnesyl diphosphate = (-)-alpha-cuprenene + diphosphate. The catalysed reaction is (2E,6E)-farnesyl diphosphate = alpha-zingiberene + diphosphate. It carries out the reaction (2E,6E)-farnesyl diphosphate = beta-acoradiene + diphosphate. The enzyme catalyses (2E,6E)-farnesyl diphosphate = (E)-beta-farnesene + diphosphate. Its pathway is secondary metabolite biosynthesis; terpenoid biosynthesis. Functionally, involved in the biosynthesis of over 15 sesquiterpenes (C15). The major products are (+)-alpha-barbatene (27.3%), (+)-thujopsene (17.8%) and (+)-beta-chamigrene (9.9%). Can use farnesyl diphosphate or geranyl diphosphate as substrates, but not geranylgeranyl diphosphate. The sequence is that of Alpha-barbatene synthase from Arabidopsis thaliana (Mouse-ear cress).